The sequence spans 227 residues: Cytochrome c oxidase subunit 2 (227 aa).

Residues 1–14 (MAYPMQLGLQDATS) lie on the Mitochondrial intermembrane side of the membrane. A helical transmembrane segment spans residues 15 to 45 (PIMEELTDFHDHTLMIVFLISTLVLYIISLM). Over 46–59 (LTTKLTHTNTMDAQ) the chain is Mitochondrial matrix. Residues 60 to 87 (EVETVWTILPAIILIMIALPSLRILYMM) form a helical membrane-spanning segment. Residues 88–227 (DEINDPYLTV…QFESWTSSMT (140 aa)) lie on the Mitochondrial intermembrane side of the membrane. Cu cation-binding residues include His161, Cys196, Glu198, Cys200, His204, and Met207. Position 198 (Glu198) interacts with Mg(2+).

The protein belongs to the cytochrome c oxidase subunit 2 family. Component of the cytochrome c oxidase (complex IV, CIV), a multisubunit enzyme composed of 14 subunits. The complex is composed of a catalytic core of 3 subunits MT-CO1, MT-CO2 and MT-CO3, encoded in the mitochondrial DNA, and 11 supernumerary subunits COX4I, COX5A, COX5B, COX6A, COX6B, COX6C, COX7A, COX7B, COX7C, COX8 and NDUFA4, which are encoded in the nuclear genome. The complex exists as a monomer or a dimer and forms supercomplexes (SCs) in the inner mitochondrial membrane with NADH-ubiquinone oxidoreductase (complex I, CI) and ubiquinol-cytochrome c oxidoreductase (cytochrome b-c1 complex, complex III, CIII), resulting in different assemblies (supercomplex SCI(1)III(2)IV(1) and megacomplex MCI(2)III(2)IV(2)). Found in a complex with TMEM177, COA6, COX18, COX20, SCO1 and SCO2. Interacts with TMEM177 in a COX20-dependent manner. Interacts with COX20. Interacts with COX16. The cofactor is Cu cation.

The protein localises to the mitochondrion inner membrane. The enzyme catalyses 4 Fe(II)-[cytochrome c] + O2 + 8 H(+)(in) = 4 Fe(III)-[cytochrome c] + 2 H2O + 4 H(+)(out). Component of the cytochrome c oxidase, the last enzyme in the mitochondrial electron transport chain which drives oxidative phosphorylation. The respiratory chain contains 3 multisubunit complexes succinate dehydrogenase (complex II, CII), ubiquinol-cytochrome c oxidoreductase (cytochrome b-c1 complex, complex III, CIII) and cytochrome c oxidase (complex IV, CIV), that cooperate to transfer electrons derived from NADH and succinate to molecular oxygen, creating an electrochemical gradient over the inner membrane that drives transmembrane transport and the ATP synthase. Cytochrome c oxidase is the component of the respiratory chain that catalyzes the reduction of oxygen to water. Electrons originating from reduced cytochrome c in the intermembrane space (IMS) are transferred via the dinuclear copper A center (CU(A)) of subunit 2 and heme A of subunit 1 to the active site in subunit 1, a binuclear center (BNC) formed by heme A3 and copper B (CU(B)). The BNC reduces molecular oxygen to 2 water molecules using 4 electrons from cytochrome c in the IMS and 4 protons from the mitochondrial matrix. The protein is Cytochrome c oxidase subunit 2 (MT-CO2) of Cratogeomys castanops (Yellow-faced pocket gopher).